We begin with the raw amino-acid sequence, 153 residues long: MAKLGYKVEADPSKTAKAMGRTLRISKKHALEICREINGMKLETAVSFLNRVLALETPVPFKVHNKDVPHRKGKIGTHAGRFPQKATEEILKVLDNAKKNAEYKGLNTEKLRIKHISSNKGFIIKRFMPRAFGRASPKYQETIHIQVILEEFY.

This sequence belongs to the universal ribosomal protein uL22 family. As to quaternary structure, part of the 50S ribosomal subunit.

Functionally, this protein binds specifically to 23S rRNA. It makes multiple contacts with different domains of the 23S rRNA in the assembled 50S subunit and ribosome. The globular domain of the protein is located near the polypeptide exit tunnel on the outside of the subunit, while an extended beta-hairpin is found that lines the wall of the exit tunnel in the center of the 70S ribosome. The protein is Large ribosomal subunit protein uL22 of Methanococcus vannielii (strain ATCC 35089 / DSM 1224 / JCM 13029 / OCM 148 / SB).